Here is a 425-residue protein sequence, read N- to C-terminus: Histidine--tRNA ligase 1 (425 aa).

Belongs to the class-II aminoacyl-tRNA synthetase family. Homodimer.

The protein localises to the cytoplasm. The enzyme catalyses tRNA(His) + L-histidine + ATP = L-histidyl-tRNA(His) + AMP + diphosphate + H(+). The sequence is that of Histidine--tRNA ligase 1 from Bacillus anthracis.